Here is a 664-residue protein sequence, read N- to C-terminus: Protein-arginine deiminase type-3 (664 aa).

It belongs to the protein arginine deiminase family. The cofactor is Ca(2+). As to expression, epidermis and hair follicles.

It localises to the cytoplasm. The catalysed reaction is L-arginyl-[protein] + H2O = L-citrullyl-[protein] + NH4(+). In terms of biological role, catalyzes the deimination of arginine residues of proteins. In Rattus norvegicus (Rat), this protein is Protein-arginine deiminase type-3 (Padi3).